The primary structure comprises 1505 residues: MAYNWQTEPNRAEPQEGGHDHQQCHHADQHLSSRQVRLGFDQLVEELSNKTPLPEDEKEGTCFVPDTPNLDSKWQSIYGPHPRHFNEFTSQSPHFSQLPFGKASAIGFNPAVLPAHQFIHEGASWRNPTRKYHGGEDPRFSALTPSSTGLDKCHQQGQSGTEHCNYYVEPENNVPHHYSPYSMDSIPDSEEKGSGDADLVEPSLVFSKDSFLPRASENMSVESTEPIGCPLEIVEAPQGSNKSLASFCNNVTKIRGLYHASDTNSNSGKIWAITTAYPSRLFADTQFRVKISTDNSAQLLLLKPPANYLVKDLIAEILLLCANEQLSPKEYLLSICGSEEFLQTDHCLGSHKIFQKSKSVIQLHLQRSRDTPGKLSRKRDDDRSRVHLNQLLEFTHIWKISRQCLSTVMKSYNLHVEHLLKTQEDVEEKPLSSMFSCGRHPPQPHGNDIIEDVRNICSVLGCIETKQVSDAVKELTLILQRPSQNFHQNSETSKKGFIENVTSELSRSLHQLVDVYCSSFCTDFRPARAPGGVSRDHAGLHSHLSFTVCSLHNVPETWAHSYKAFSFSCWLTYAGKKLCQVKSCRSLPVTKSFSFSVNWNEIINFPLEIKSLPRESMLVIKLFGIDSATHSANLLAWTCLPLFPKEKSPLGSRLLSMTLQSEPPIEMMAPGVWDGSQPTPLTLQIDFPAATWEYVKPETEENRTDHQEPPRECLKHIARLSQKQPPLLLSVEKRRYLWFYRFYCNNENSSLPLVLGSAPGWDEGTVSEMHAVLRRWTFSHPLEALGLLTSRFPDQDIREVAVQQLDNFLTDELLDCLPQLVQAVKFEWSLESPLVELLLHRSLQSIRVAHRLFWLLRDAQGEDYFKSWYQELLAALQFCAGEALIEELSKEQKLVKLLGDIGEKVKSAGDAQRKDVLKKEIGSLEEFFKDIKTCHLPLNPALCVKGIDRDACSYFTSNALPLKITFINANPMGKNISVIFKAGDDLRQDMLVLQIIQVMDNVWLQEGLDMQMIIYGCLATGKAQGFIEMVPDAVTLAKIHLHSGLIGPLKENTIKKWFSQHNHLKEDYEKALRNFFYSCAGWCVVTFILGVCDRHNDNIMLTKSGHMFHIDFGKFLGHAQTFGGIKRDRAPFIFTSEMEYFITEGGKNTQHFQDFVELCCRAYNIVRKHSQLLLSLLEMMLHAGLPELRGIEDLKYVHDNLRPQDTDLEATSHFTTKIKQSLECFPVKLNNLIHTLAQMPAFSLARPAPQTPPQECCVLNKTRTIQRVTILGFSKTHSNLYLIEVTRSDNRKNLAKKSFEQFYRLHSQIQKQFPLLTLPEFPHWWHLPFTDSHHERIRDLSHYVEQVLHGSYEVANSDCVLSFFLSEHIQQTLEDSPFVDPGDHSPDKSPQVQLLMTYEDTKLTILVKHLKNIHLPDGSAPSAHVEIYLLPHPSEVRRKKTKCVPKCTDPTYNEIVVYDDVSGLQGHVLMLIVKSKTVFVGAVNIQLCSVPLNEEKWYPLGNSII.

The segment at Met-1–Ser-32 is disordered. Basic and acidic residues predominate over residues Asn-10 to Leu-31. The region spanning Pro-278–Asp-370 is the PI3K-RBD domain. In terms of domain architecture, C2 PI3K-type spans Leu-540–Pro-688. The 177-residue stretch at Arg-703–Cys-879 folds into the PIK helical domain. A PI3K/PI4K catalytic domain is found at Asp-948–Pro-1226. The interval Tyr-954–Leu-960 is G-loop. A catalytic loop region spans residues Gly-1090–Asn-1098. The segment at His-1109–Thr-1135 is activation loop. In terms of domain architecture, PX spans Leu-1259 to Gln-1371. Positions His-1384 to Ile-1505 constitute a C2 domain.

It belongs to the PI3/PI4-kinase family. Predominantly expressed in normal liver. High levels also found in regenerating liver. Very low levels found in heart and testis.

It localises to the membrane. The enzyme catalyses a 1,2-diacyl-sn-glycero-3-phospho-(1D-myo-inositol) + ATP = a 1,2-diacyl-sn-glycero-3-phospho-(1D-myo-inositol-3-phosphate) + ADP + H(+). The catalysed reaction is a 1,2-diacyl-sn-glycero-3-phospho-(1D-myo-inositol 4-phosphate) + ATP = a 1,2-diacyl-sn-glycero-3-phospho-(1D-myo-inositol-3,4-bisphosphate) + ADP + H(+). Functionally, generates phosphatidylinositol 3-phosphate (PtdIns3P) and phosphatidylinositol 3,4-bisphosphate (PtdIns(3,4)P2) that act as second messengers. May play a role in SDF1A-stimulated chemotaxis. This Rattus norvegicus (Rat) protein is Phosphatidylinositol 3-kinase C2 domain-containing subunit gamma (Pik3c2g).